Here is a 322-residue protein sequence, read N- to C-terminus: Ribosomal RNA small subunit methyltransferase H (322 aa).

S-adenosyl-L-methionine is bound by residues 40-42 (GGH), aspartate 60, phenylalanine 84, aspartate 106, and glutamine 113.

It belongs to the methyltransferase superfamily. RsmH family.

It localises to the cytoplasm. It catalyses the reaction cytidine(1402) in 16S rRNA + S-adenosyl-L-methionine = N(4)-methylcytidine(1402) in 16S rRNA + S-adenosyl-L-homocysteine + H(+). Functionally, specifically methylates the N4 position of cytidine in position 1402 (C1402) of 16S rRNA. The chain is Ribosomal RNA small subunit methyltransferase H from Aggregatibacter aphrophilus (strain NJ8700) (Haemophilus aphrophilus).